We begin with the raw amino-acid sequence, 342 residues long: MDTAQWPQEIVVKPLEEIVTNTCPKPQPQPLQPQQPPSVGGERKARPEKDQAVNCPRCNSTNTKFCYYNNYSLTQPRYFCKGCRRYWTEGGSLRNIPVGGGSRKNKRSHSSSSDISNNHSDSTQPATKKHLSDHHHHLMSMSQQGLTGQNPKFLETTQQDLNLGFSPHGMIRTNFTDLIHNIGNNTNKSNNNNNPLIVSSCSAMATSSLDLIRNNSNNGNSSNSSFMGFPVHNQDPASGGFSMQDHYKPCNTNTTLLGFSLDHHHNNGFHGGFQGGEEGGEGGDDVNGRHLFPFEDLKLPVSSSSATINVDINEHQKRGSGSDAAATSGGYWTGMLSGGSWC.

A disordered region spans residues 21 to 54 (NTCPKPQPQPLQPQQPPSVGGERKARPEKDQAVN). Over residues 25 to 36 (KPQPQPLQPQQP) the composition is skewed to pro residues. Residues 41–51 (GERKARPEKDQ) show a composition bias toward basic and acidic residues. Residues 53 to 107 (VNCPRCNSTNTKFCYYNNYSLTQPRYFCKGCRRYWTEGGSLRNIPVGGGSRKNKR) form a Dof-type zinc finger. Residues Cys55, Cys58, Cys80, and Cys83 each contribute to the Zn(2+) site. Residues 94-136 (RNIPVGGGSRKNKRSHSSSSDISNNHSDSTQPATKKHLSDHHH) form a disordered region. Residues 110–122 (SSSSDISNNHSDS) show a composition bias toward low complexity. The span at 127–136 (TKKHLSDHHH) shows a compositional bias: basic residues.

In terms of tissue distribution, accumulates in the stele.

It localises to the nucleus. Its function is as follows. Transcription factor that binds specifically to a 5'-AA[AG]G-3' consensus core sequence. This is Dof zinc finger protein DOF4.6 from Arabidopsis thaliana (Mouse-ear cress).